A 280-amino-acid polypeptide reads, in one-letter code: Ribosomal RNA-processing protein 7 homolog A (280 aa).

One can recognise an RRM domain in the interval 59–159; sequence RTLFVLNVPP…SGIHKWISDY (101 aa). The residue at position 99 (Ser-99) is a Phosphoserine.

It belongs to the RRP7 family. As to quaternary structure, part of the small subunit (SSU) processome, composed of more than 70 proteins and the RNA chaperone small nucleolar RNA (snoRNA) U3. Interacts with NOL6; required for NOL6 localization to nucleolus. As to expression, expressed in the apical radial glial cells in the developing brain.

It localises to the nucleus. The protein resides in the nucleolus. The protein localises to the cell projection. Its subcellular location is the cilium. It is found in the cytoplasm. It localises to the cytoskeleton. The protein resides in the microtubule organizing center. The protein localises to the centrosome. In terms of biological role, nucleolar protein that is involved in ribosomal RNA (rRNA) processing. Also plays a role in primary cilia resorption, and cell cycle progression in neurogenesis and neocortex development. Part of the small subunit (SSU) processome, first precursor of the small eukaryotic ribosomal subunit. During the assembly of the SSU processome in the nucleolus, many ribosome biogenesis factors, an RNA chaperone and ribosomal proteins associate with the nascent pre-rRNA and work in concert to generate RNA folding, modifications, rearrangements and cleavage as well as targeted degradation of pre-ribosomal RNA by the RNA exosome. The sequence is that of Ribosomal RNA-processing protein 7 homolog A from Homo sapiens (Human).